The chain runs to 357 residues: UPF0283 membrane protein BCAN_A1047 (357 aa).

The segment at 1–36 is disordered; the sequence is MSDKTPRKPTAFRLEQPARVSAASEQEEPRRPRAVK. The span at 27–36 shows a compositional bias: basic and acidic residues; it reads EEPRRPRAVK. A run of 2 helical transmembrane segments spans residues 78–98 and 109–129; these read ILFGALGILVSFAIGIWTEDL and LGWTALGVAMVALAAFAAIIL.

Belongs to the UPF0283 family.

The protein resides in the cell inner membrane. This Brucella canis (strain ATCC 23365 / NCTC 10854 / RM-666) protein is UPF0283 membrane protein BCAN_A1047.